The chain runs to 445 residues: UDP-N-acetylmuramoylalanine--D-glutamate ligase (445 aa).

117–123 (GSNGKTT) provides a ligand contact to ATP.

Belongs to the MurCDEF family.

It localises to the cytoplasm. It carries out the reaction UDP-N-acetyl-alpha-D-muramoyl-L-alanine + D-glutamate + ATP = UDP-N-acetyl-alpha-D-muramoyl-L-alanyl-D-glutamate + ADP + phosphate + H(+). The protein operates within cell wall biogenesis; peptidoglycan biosynthesis. Its function is as follows. Cell wall formation. Catalyzes the addition of glutamate to the nucleotide precursor UDP-N-acetylmuramoyl-L-alanine (UMA). The sequence is that of UDP-N-acetylmuramoylalanine--D-glutamate ligase from Neisseria meningitidis serogroup A / serotype 4A (strain DSM 15465 / Z2491).